The following is an 840-amino-acid chain: DNA helicase MCM8 (840 aa).

The tract at residues Gln-16–Gln-54 is disordered. Over residues Lys-30 to Leu-40 the composition is skewed to basic and acidic residues. Residues Leu-402–Val-609 enclose the MCM domain. Residue Gly-454–Ser-461 participates in ATP binding. Position 630 is a phosphoserine (Ser-630).

It belongs to the MCM family. As to quaternary structure, component of the MCM8-MCM9 complex, which forms a hexamer composed of MCM8 and MCM9. Interacts with the DNA mismatch repair (MMR) complex composed at least of MSH2, MSH3, MSH6, PMS1 and MLH1. Interacts with RAD51; the interaction recruits RAD51 to DNA damage sites. Interacts with the MRN complex composed of MRE11, RAD50 and NBN/NBS1. Interacts with CDC6 and ORC2. Interacts with HROB; the interaction recruits the MCM8-MCM9 complex to DNA damage sites. Highest levels in placenta, lung and pancreas. Low levels in skeletal muscle and kidney. Expressed in various tumors with highest levels in colon and lung cancers.

It localises to the nucleus. The protein resides in the chromosome. The catalysed reaction is ATP + H2O = ADP + phosphate + H(+). Its function is as follows. Component of the MCM8-MCM9 complex, a complex involved in the repair of double-stranded DNA breaks (DBSs) and DNA interstrand cross-links (ICLs) by homologous recombination (HR). Required for DNA resection by the MRE11-RAD50-NBN/NBS1 (MRN) complex by recruiting the MRN complex to the repair site and by promoting the complex nuclease activity. Probably by regulating the localization of the MNR complex, indirectly regulates the recruitment of downstream effector RAD51 to DNA damage sites including DBSs and ICLs. The MCM8-MCM9 complex is dispensable for DNA replication and S phase progression. However, may play a non-essential for DNA replication: may be involved in the activation of the prereplicative complex (pre-RC) during G(1) phase by recruiting CDC6 to the origin recognition complex (ORC). Probably by regulating HR, plays a key role during gametogenesis. Stabilizes MCM9 protein. The protein is DNA helicase MCM8 (MCM8) of Homo sapiens (Human).